A 339-amino-acid polypeptide reads, in one-letter code: Trace amine-associated receptor 2 (339 aa).

Residues 1–36 are Extracellular-facing; that stretch reads MASFEAQQETFDCSEYGNGSCPENERSLGVRAAMYS. The N-linked (GlcNAc...) asparagine glycan is linked to N18. Intrachain disulfides connect C21–C185 and C104–C189. Residues 37 to 57 form a helical membrane-spanning segment; the sequence is LMACAIFITIFGNLAMIISIS. Residues 58-67 are Cytoplasmic-facing; sequence YFKQLHTPTN. The helical transmembrane segment at 68-88 threads the bilayer; it reads LLILSMAVTDFLLGFTIMPYS. Topologically, residues 89–106 are extracellular; it reads MVRSVENCWYFGLTFCKI. The chain crosses the membrane as a helical span at residues 107-127; sequence HYSFDLMLSITSIFHLCSVAV. At 128–150 the chain is on the cytoplasmic side; the sequence is DRFYAICHPLHYCTKMTIPVVRR. Residues 151 to 171 traverse the membrane as a helical segment; sequence LLLVCWSVPGAFAFGVVFSEA. Residues 172-195 lie on the Extracellular side of the membrane; it reads YADGIEGYDILVACSSSCPVMFNK. The helical transmembrane segment at 196–216 threads the bilayer; sequence LWGTTLFVAGFFTPSSMMVGI. At 217-251 the chain is on the cytoplasmic side; it reads YGKIFAVSKKHARVIDNLPENQNNQMRKDKKAAKT. Residues 252–272 traverse the membrane as a helical segment; that stretch reads LGIVMGVFLLCWFPCFFTILL. The Extracellular segment spans residues 273–287; it reads DPFLNFSTPAVLFDA. An N-linked (GlcNAc...) asparagine glycan is attached at N277. Residues 288–310 form a helical membrane-spanning segment; it reads LTWFGYFNSTCNPLIYGFFYPWF. Residues 311–339 lie on the Cytoplasmic side of the membrane; it reads RRALKYILLGKIFSSHFHNTNLFTQKETE.

This sequence belongs to the G-protein coupled receptor 1 family. Mainly expressed in neurons of the olfactory epithelium. Also present in the limbic brain areas receiving projection from the olfactory system and several brain regions, including the hippocampus, cerebellum, cortex, raphe nuclei, hypothalamus and habenula.

Its subcellular location is the cell membrane. In terms of biological role, orphan olfactory receptor specific for trace amines. Trace amine compounds are enriched in animal body fluids and act on trace amine-associated receptors (TAARs) to elicit both intraspecific and interspecific innate behaviors. Ligand-binding causes a conformation change that triggers signaling via the G(s)-class of G-proteins which activate adenylate cyclase. May also be required to provide olfactory input into limbic brain areas to regulate emotional behaviors likely via modulation of the dopamine system. The protein is Trace amine-associated receptor 2 of Mus musculus (Mouse).